We begin with the raw amino-acid sequence, 95 residues long: Small ubiquitin-related modifier 2-A (95 aa).

Residue Lys11 forms a Glycyl lysine isopeptide (Lys-Gly) (interchain with G-Cter in SUMO) linkage. Residues 16–95 enclose the Ubiquitin-like domain; sequence DHINLKVAGQ…VFQQQTGGSF (80 aa). Gly93 participates in a covalent cross-link: Glycyl lysine isopeptide (Gly-Lys) (interchain with K-? in acceptor proteins). Residues 94–95 constitute a propeptide that is removed on maturation; that stretch reads SF.

Belongs to the ubiquitin family. SUMO subfamily. Interacts with sae2 and ube2i. Covalently attached to a number of proteins, including top2. Post-translationally, polymeric chains can be formed through Lys-11 cross-linking. In terms of processing, cleavage of precursor form by a sentrin-specific protease is necessary for function.

It is found in the nucleus. Its function is as follows. Ubiquitin-like protein that can be covalently attached to proteins as a monomer or as a lysine-linked polymer. Covalent attachment via an isopeptide bond to its substrates requires prior activation by the E1 complex sae1-sae2 and linkage to the E2 enzyme ube2i, and can be promoted by an E3 ligase such as pias1-4. This post-translational modification on lysine residues of proteins plays a crucial role in a number of cellular processes such as nuclear transport, DNA replication and repair, mitosis and signal transduction. Polymeric sumo2 chains are also susceptible to polyubiquitination which functions as a signal for proteasomal degradation of modified proteins. In Xenopus laevis (African clawed frog), this protein is Small ubiquitin-related modifier 2-A (sumo2-a).